Consider the following 305-residue polypeptide: uncharacterized protein (305 aa).

The segment at 267–287 (ADEQEKNWNGGAKKNARAEPA) is disordered.

Belongs to the DnaB/DnaD family.

This is an uncharacterized protein from Listeria innocua serovar 6a (strain ATCC BAA-680 / CLIP 11262).